The primary structure comprises 54 residues: Ovomucoid (54 aa).

Residues 4-54 (VDCSEYPKPACTLEHRPLCGSDNKTYGNKCNFCNAVVESNGTLTLSHFGKC) form the Kazal-like domain. 3 disulfides stabilise this stretch: Cys6-Cys36, Cys14-Cys33, and Cys22-Cys54. A glycan (N-linked (GlcNAc...) asparagine) is linked at Asn43.

It localises to the secreted. The chain is Ovomucoid from Pavo muticus (Green peafowl).